The following is a 317-amino-acid chain: ADIPOR-like receptor IZH1 (317 aa).

The Lumenal segment spans residues 1–80 (MSEERGMKEQ…FNNESINIYT (80 aa)). The N-linked (GlcNAc...) asparagine glycan is linked to asparagine 73. Residues 81–101 (HLIPGVAYLVLFLIFADLVLA) form a helical membrane-spanning segment. At 102–113 (QLLPGLDAGEHR) the chain is on the cytoplasmic side. The helical transmembrane segment at 114 to 136 (MLRFYLLGAFTCLACSSCFHCLK) threads the bilayer. The Lumenal segment spans residues 137–148 (QHSEPHSRLWSK). A helical transmembrane segment spans residues 149–169 (VDYLGILAQITCSTISLLYYG). At 170–175 (YHSYPS) the chain is on the cytoplasmic side. Residues 176-196 (HFVFFSTLTVALCSACAVLVL) traverse the membrane as a helical segment. A glycan (N-linked (GlcNAc...) asparagine) is linked at asparagine 197. Residues 197-210 (NDSFNTVAFRPLRA) lie on the Lumenal side of the membrane. The helical transmembrane segment at 211–231 (FLFMAFGLSGVIPVLAGSYQF) threads the bilayer. Topologically, residues 232 to 243 (GFAEWAARIQLK) are cytoplasmic. The chain crosses the membrane as a helical span at residues 244–264 (YVLYEAVFYITGALVYGFRIP). Residues 265–283 (ERFAPGKFDMVGHSHQIFH) lie on the Lumenal side of the membrane. The helical transmembrane segment at 284–304 (LLVVLGTLCHFRAVTGSYIFI) threads the bilayer. Residues 305 to 317 (CTGKHYSSLLMFI) are Cytoplasmic-facing.

This sequence belongs to the ADIPOR family.

The protein resides in the endoplasmic reticulum membrane. Its function is as follows. ADIPOR-like receptor involved in zinc metabolism either by altering membrane sterol content or by directly altering cellular zinc levels. This Eremothecium gossypii (strain ATCC 10895 / CBS 109.51 / FGSC 9923 / NRRL Y-1056) (Yeast) protein is ADIPOR-like receptor IZH1 (IZH1).